The primary structure comprises 200 residues: NADH-quinone oxidoreductase subunit C (200 aa).

Belongs to the complex I 30 kDa subunit family. As to quaternary structure, NDH-1 is composed of 14 different subunits. Subunits NuoB, C, D, E, F, and G constitute the peripheral sector of the complex.

Its subcellular location is the cell inner membrane. It catalyses the reaction a quinone + NADH + 5 H(+)(in) = a quinol + NAD(+) + 4 H(+)(out). Its function is as follows. NDH-1 shuttles electrons from NADH, via FMN and iron-sulfur (Fe-S) centers, to quinones in the respiratory chain. The immediate electron acceptor for the enzyme in this species is believed to be ubiquinone. Couples the redox reaction to proton translocation (for every two electrons transferred, four hydrogen ions are translocated across the cytoplasmic membrane), and thus conserves the redox energy in a proton gradient. The polypeptide is NADH-quinone oxidoreductase subunit C (Chelativorans sp. (strain BNC1)).